The sequence spans 480 residues: Serine/threonine-protein kinase WAG2 (480 aa).

One can recognise a Protein kinase domain in the interval 88-396 (LKLIRHLGTG…AQDIKRHPFF (309 aa)). Residues 94 to 102 (LGTGNLGRV) and Lys117 contribute to the ATP site. Asp213 (proton acceptor) is an active-site residue.

This sequence belongs to the protein kinase superfamily. Ser/Thr protein kinase family. In terms of tissue distribution, expressed in root tips, lateral root primordia and emerging true leaf primordia.

It is found in the cytoplasm. The protein resides in the cytosol. It carries out the reaction L-seryl-[protein] + ATP = O-phospho-L-seryl-[protein] + ADP + H(+). It catalyses the reaction L-threonyl-[protein] + ATP = O-phospho-L-threonyl-[protein] + ADP + H(+). Serine/threonine-protein kinase involved in the regulation of auxin signaling. Acts as a positive regulator of cellular auxin efflux and regulates organ development by enhancing PIN-mediated polar auxin transport. Phosphorylates conserved serine residues in the PIN auxin efflux carriers. Phosphorylation of PIN proteins is required and sufficient for apical-basal PIN polarity that enables directional intercellular auxin fluxes, which mediate differential growth, tissue patterning and organogenesis. Acts as a suppressor of root waving. This Arabidopsis thaliana (Mouse-ear cress) protein is Serine/threonine-protein kinase WAG2 (WAG2).